Reading from the N-terminus, the 295-residue chain is Chromatin modification-related protein YNG2 (295 aa).

The disordered stretch occupies residues 151 to 208 (NGTAGSGSSSGRKRPASSSSANGKGQKRKQQKKERSRSHQRAGTVSRDVSPNAGIGRD). The segment covering 156–171 (SGSSSGRKRPASSSSA) has biased composition (low complexity). Over residues 175 to 190 (GQKRKQQKKERSRSHQ) the composition is skewed to basic residues. Residues 233–282 (QLYCFCQRVSYGEMVACDGPNCKYEWFHYSCVNLTEPPKGQWYCPECRLE) form a PHD-type zinc finger. Zn(2+) is bound by residues cysteine 236, cysteine 238, cysteine 249, cysteine 254, histidine 260, cysteine 263, cysteine 276, and cysteine 279.

It belongs to the ING family. As to quaternary structure, interacts with H3K4me3 and to a lesser extent with H3K4me2. Component of the NuA4 histone acetyltransferase complex.

It is found in the nucleus. Component of the NuA4 histone acetyltransferase complex which is involved in transcriptional activation of selected genes principally by acetylation of nucleosomal histone H4 and H2A. The NuA4 complex is also involved in DNA repair. Involved in cell cycle progression and meiosis. This is Chromatin modification-related protein YNG2 (YNG2) from Kluyveromyces lactis (strain ATCC 8585 / CBS 2359 / DSM 70799 / NBRC 1267 / NRRL Y-1140 / WM37) (Yeast).